Reading from the N-terminus, the 474-residue chain is Ubiquinol-cytochrome-c reductase complex core protein 2, mitochondrial (474 aa).

The transit peptide at methionine 1–arginine 42 directs the protein to the mitochondrion.

The protein belongs to the peptidase M16 family. UQCRC2/QCR2 subfamily. Component of the ubiquinol-cytochrome c oxidoreductase (cytochrome b-c1 complex, complex III, CIII), a multisubunit enzyme composed of 3 respiratory subunits cytochrome b, cytochrome c1 and Rieske protein, 2 core protein subunits, and additional low-molecular weight protein subunits. The complex exists as an obligatory dimer and forms supercomplexes (SCs) in the inner mitochondrial membrane with cytochrome c oxidase (complex IV, CIV).

The protein localises to the mitochondrion inner membrane. In terms of biological role, component of the ubiquinol-cytochrome c oxidoreductase, a multisubunit transmembrane complex that is part of the mitochondrial electron transport chain which drives oxidative phosphorylation. The respiratory chain contains 3 multisubunit complexes succinate dehydrogenase (complex II, CII), ubiquinol-cytochrome c oxidoreductase (cytochrome b-c1 complex, complex III, CIII) and cytochrome c oxidase (complex IV, CIV), that cooperate to transfer electrons derived from NADH and succinate to molecular oxygen, creating an electrochemical gradient over the inner membrane that drives transmembrane transport and the ATP synthase. The cytochrome b-c1 complex catalyzes electron transfer from ubiquinol to cytochrome c, linking this redox reaction to translocation of protons across the mitochondrial inner membrane, with protons being carried across the membrane as hydrogens on the quinol. In the process called Q cycle, 2 protons are consumed from the matrix, 4 protons are released into the intermembrane space and 2 electrons are passed to cytochrome c. The sequence is that of Ubiquinol-cytochrome-c reductase complex core protein 2, mitochondrial from Euglena gracilis.